Reading from the N-terminus, the 202-residue chain is Small ribosomal subunit protein uS4 (202 aa).

One can recognise an S4 RNA-binding domain in the interval 93–155 (RRLDNVVRRV…ENLKNLYRGV (63 aa)).

The protein belongs to the universal ribosomal protein uS4 family. Part of the 30S ribosomal subunit. Contacts protein S5. The interaction surface between S4 and S5 is involved in control of translational fidelity.

One of the primary rRNA binding proteins, it binds directly to 16S rRNA where it nucleates assembly of the body of the 30S subunit. In terms of biological role, with S5 and S12 plays an important role in translational accuracy. This is Small ribosomal subunit protein uS4 from Rhodopirellula baltica (strain DSM 10527 / NCIMB 13988 / SH1).